Reading from the N-terminus, the 572-residue chain is Urease subunit alpha (572 aa).

The Urease domain occupies 136 to 572 (GGIDTHIHWI…VPLAQRYFLF (437 aa)). Ni(2+) contacts are provided by His141, His143, and Lys224. Lys224 carries the post-translational modification N6-carboxylysine. His226 lines the substrate pocket. His253 and His279 together coordinate Ni(2+). The active-site Proton donor is His327. Asp367 contacts Ni(2+).

It belongs to the metallo-dependent hydrolases superfamily. Urease alpha subunit family. As to quaternary structure, heterotrimer of UreA (gamma), UreB (beta) and UreC (alpha) subunits. Three heterotrimers associate to form the active enzyme. Ni cation serves as cofactor. Post-translationally, carboxylation allows a single lysine to coordinate two nickel ions.

The protein resides in the cytoplasm. The catalysed reaction is urea + 2 H2O + H(+) = hydrogencarbonate + 2 NH4(+). Its pathway is nitrogen metabolism; urea degradation; CO(2) and NH(3) from urea (urease route): step 1/1. The chain is Urease subunit alpha from Actinobacillus pleuropneumoniae (Haemophilus pleuropneumoniae).